Reading from the N-terminus, the 156-residue chain is ATP synthase subunit b (156 aa).

Residues 7–27 (LIGQTIAFIVFVWFCMKFVWP) traverse the membrane as a helical segment.

The protein belongs to the ATPase B chain family. As to quaternary structure, F-type ATPases have 2 components, F(1) - the catalytic core - and F(0) - the membrane proton channel. F(1) has five subunits: alpha(3), beta(3), gamma(1), delta(1), epsilon(1). F(0) has three main subunits: a(1), b(2) and c(10-14). The alpha and beta chains form an alternating ring which encloses part of the gamma chain. F(1) is attached to F(0) by a central stalk formed by the gamma and epsilon chains, while a peripheral stalk is formed by the delta and b chains.

It is found in the cell inner membrane. F(1)F(0) ATP synthase produces ATP from ADP in the presence of a proton or sodium gradient. F-type ATPases consist of two structural domains, F(1) containing the extramembraneous catalytic core and F(0) containing the membrane proton channel, linked together by a central stalk and a peripheral stalk. During catalysis, ATP synthesis in the catalytic domain of F(1) is coupled via a rotary mechanism of the central stalk subunits to proton translocation. Functionally, component of the F(0) channel, it forms part of the peripheral stalk, linking F(1) to F(0). The protein is ATP synthase subunit b of Idiomarina loihiensis (strain ATCC BAA-735 / DSM 15497 / L2-TR).